Consider the following 319-residue polypeptide: Major intracellular serine protease (319 aa).

Positions 1 to 17 (MNGEIRLIPYVTNEQIM) are excised as a propeptide. Positions 23 to 307 (PEGIKVIKAP…FLYLTAPDEL (285 aa)) constitute a Peptidase S8 domain. Residues D50, H87, and S246 each act as charge relay system in the active site.

This sequence belongs to the peptidase S8 family. In terms of assembly, homodimer.

It localises to the cytoplasm. Functionally, major intracellular protease produced by Bacillus subtilis. This Bacillus subtilis (strain 168) protein is Major intracellular serine protease (isp).